The sequence spans 954 residues: Glycine dehydrogenase (decarboxylating) (954 aa).

Lys-704 carries the N6-(pyridoxal phosphate)lysine modification.

The protein belongs to the GcvP family. As to quaternary structure, the glycine cleavage system is composed of four proteins: P, T, L and H. The cofactor is pyridoxal 5'-phosphate.

It catalyses the reaction N(6)-[(R)-lipoyl]-L-lysyl-[glycine-cleavage complex H protein] + glycine + H(+) = N(6)-[(R)-S(8)-aminomethyldihydrolipoyl]-L-lysyl-[glycine-cleavage complex H protein] + CO2. In terms of biological role, the glycine cleavage system catalyzes the degradation of glycine. The P protein binds the alpha-amino group of glycine through its pyridoxal phosphate cofactor; CO(2) is released and the remaining methylamine moiety is then transferred to the lipoamide cofactor of the H protein. This is Glycine dehydrogenase (decarboxylating) from Vibrio vulnificus (strain YJ016).